A 393-amino-acid chain; its full sequence is Staphopain B (393 aa).

Positions 1 to 36 (MNSSCKSRVFNIISIIMVSMLILSLGAFANNNKAKA) are cleaved as a signal peptide. Residues 37-219 (DSHSKQLEIN…KVEENEAIQE (183 aa)) constitute a propeptide that is removed on maturation. Catalysis depends on residues Cys243, His340, and Asn360.

It belongs to the peptidase C47 family. As to quaternary structure, in the cytoplasm, prematurely activated/folded SspB forms a stable non-covalent complex with SspC. Proteolytically cleaved by staphylococcal serine protease (SspA).

It is found in the secreted. Its activity is regulated as follows. Prematurely activated/folded staphopain B is inhibited by staphostatin B (SspC), which is probably required to protect staphylococcal cytoplasmic proteins from degradation by SspB. Also inactivated by E-64 and stimulated by EDTA. Cysteine protease that plays an important role in the inhibition of host innate immune response. Degrades host elastin, fibrogen, fibronectin and kininogen. Blocks phagocytosis of opsonised S.aureus by neutrophils and monocytes by inducing their death in a proteolytic activity-dependent manner. Decreases surface expression of the 'don't eat me' signal CD31 on neutrophils. Cleaves host galectin-3/LGALS3, thereby inhibiting the neutrophil-activating ability of the lectin. The sequence is that of Staphopain B (sspB) from Staphylococcus aureus (strain NCTC 8325 / PS 47).